The following is a 632-amino-acid chain: MEIRERDGLARIARFDTPHGTIETPTVLPVINPNIMDITPEEMKKYGVHGVITNSYIILRNDRLREEAEKYGVHSLIGYDGPVMTDSGTFQSYVYGSVEFNNRQVVEFQKTIGSDILTILDIFTTPSSSRQEVENAITETYRRMLEVNDAGGMIAGPIQGGIYPDLRKRSAELMNSTNASYLPIGGVVPLLESYEYDKLVDIILNSKLNVSFGKPIHLFGGGHPMFFAFAVYLGVDLFDSASYVKYAKDDRLIYPDGTRDLARIIEIPEWSPLFDKYTVKELKELPKEQRSVELSRHNLKAIFMEISEIRERIYEESMDQYLAQKAKSHPSLLKAYVKVMQYSKMLEKYQDLFKKAAYFFYDSFSTKNTYVARLEKFTSKYLTSKKKETYVFSRKDWLPGYTNLNFVRDVYERTECNALIPWSGIMVPAELENTYPIEQTVSSGLEPDPDVSAISESISPFDIRVYKGESVDSDKIRSFDLEKIRTIADYQFGYGIGKDFFKDDVRIFKSKTGRIRGVFDKGNKLIATLRNDGFFTLTFHGATLLYNVSKSPNLRVFVKNESAEYNAKGYSVFFKFILDADPDIIAKNETLVVNENGELVAVGKATVSGKELREYSDGIAVKIHEGRDQSAK.

Residue D86 is the Nucleophile of the active site. Positions 121 and 186 each coordinate substrate. One can recognise a PUA domain in the interval 553-628 (NLRVFVKNES…IAVKIHEGRD (76 aa)).

It belongs to the archaeosine tRNA-ribosyltransferase family. It depends on Zn(2+) as a cofactor.

It carries out the reaction guanosine(15) in tRNA + 7-cyano-7-deazaguanine = 7-cyano-7-carbaguanosine(15) in tRNA + guanine. It participates in tRNA modification; archaeosine-tRNA biosynthesis. Its function is as follows. Exchanges the guanine residue with 7-cyano-7-deazaguanine (preQ0) at position 15 in the dihydrouridine loop (D-loop) of archaeal tRNAs. In Thermoplasma volcanium (strain ATCC 51530 / DSM 4299 / JCM 9571 / NBRC 15438 / GSS1), this protein is tRNA-guanine(15) transglycosylase.